Consider the following 302-residue polypeptide: Succinate--CoA ligase [ADP-forming] subunit alpha (302 aa).

Residues 17-20 (TGST), Lys43, and 96-98 (ITE) each bind CoA. Tyr159 contacts substrate. His247 acts as the Tele-phosphohistidine intermediate in catalysis.

Belongs to the succinate/malate CoA ligase alpha subunit family. As to quaternary structure, heterotetramer of two alpha and two beta subunits.

It catalyses the reaction succinate + ATP + CoA = succinyl-CoA + ADP + phosphate. It carries out the reaction GTP + succinate + CoA = succinyl-CoA + GDP + phosphate. It functions in the pathway carbohydrate metabolism; tricarboxylic acid cycle; succinate from succinyl-CoA (ligase route): step 1/1. In terms of biological role, succinyl-CoA synthetase functions in the citric acid cycle (TCA), coupling the hydrolysis of succinyl-CoA to the synthesis of either ATP or GTP and thus represents the only step of substrate-level phosphorylation in the TCA. The alpha subunit of the enzyme binds the substrates coenzyme A and phosphate, while succinate binding and nucleotide specificity is provided by the beta subunit. This is Succinate--CoA ligase [ADP-forming] subunit alpha from Staphylococcus aureus (strain MSSA476).